Consider the following 386-residue polypeptide: L-lactate dehydrogenase (386 aa).

The region spanning 1 to 380 (MIISAASDYR…SGDALSRVTR (380 aa)) is the FMN hydroxy acid dehydrogenase domain. Residue Tyr-24 participates in substrate binding. 2 residues coordinate FMN: Ser-106 and Gln-127. Residue Tyr-129 coordinates substrate. Thr-155 contributes to the FMN binding site. Arg-164 contacts substrate. Lys-251 provides a ligand contact to FMN. His-275 acts as the Proton acceptor in catalysis. A substrate-binding site is contributed by Arg-278. An FMN-binding site is contributed by 306 to 330 (DSGIRSGLDVVRMLALGADAVLLGR).

Belongs to the FMN-dependent alpha-hydroxy acid dehydrogenase family. FMN serves as cofactor.

The protein localises to the cell inner membrane. It carries out the reaction (S)-lactate + A = pyruvate + AH2. Catalyzes the conversion of L-lactate to pyruvate. Is coupled to the respiratory chain. The polypeptide is L-lactate dehydrogenase (Xanthomonas campestris pv. campestris (strain 8004)).